The primary structure comprises 224 residues: Thiamine-phosphate synthase (224 aa).

4-amino-2-methyl-5-(diphosphooxymethyl)pyrimidine-binding positions include 43–47 and asparagine 75; that span reads QYRPK. Aspartate 76 and aspartate 95 together coordinate Mg(2+). Serine 114 provides a ligand contact to 4-amino-2-methyl-5-(diphosphooxymethyl)pyrimidine. A 2-[(2R,5Z)-2-carboxy-4-methylthiazol-5(2H)-ylidene]ethyl phosphate-binding site is contributed by 141 to 143; that stretch reads SAT. 4-amino-2-methyl-5-(diphosphooxymethyl)pyrimidine is bound at residue lysine 144. Glycine 171 contributes to the 2-[(2R,5Z)-2-carboxy-4-methylthiazol-5(2H)-ylidene]ethyl phosphate binding site.

This sequence belongs to the thiamine-phosphate synthase family. Requires Mg(2+) as cofactor.

It catalyses the reaction 2-[(2R,5Z)-2-carboxy-4-methylthiazol-5(2H)-ylidene]ethyl phosphate + 4-amino-2-methyl-5-(diphosphooxymethyl)pyrimidine + 2 H(+) = thiamine phosphate + CO2 + diphosphate. The catalysed reaction is 2-(2-carboxy-4-methylthiazol-5-yl)ethyl phosphate + 4-amino-2-methyl-5-(diphosphooxymethyl)pyrimidine + 2 H(+) = thiamine phosphate + CO2 + diphosphate. The enzyme catalyses 4-methyl-5-(2-phosphooxyethyl)-thiazole + 4-amino-2-methyl-5-(diphosphooxymethyl)pyrimidine + H(+) = thiamine phosphate + diphosphate. Its pathway is cofactor biosynthesis; thiamine diphosphate biosynthesis; thiamine phosphate from 4-amino-2-methyl-5-diphosphomethylpyrimidine and 4-methyl-5-(2-phosphoethyl)-thiazole: step 1/1. Its function is as follows. Condenses 4-methyl-5-(beta-hydroxyethyl)thiazole monophosphate (THZ-P) and 2-methyl-4-amino-5-hydroxymethyl pyrimidine pyrophosphate (HMP-PP) to form thiamine monophosphate (TMP). The sequence is that of Thiamine-phosphate synthase from Methylococcus capsulatus (strain ATCC 33009 / NCIMB 11132 / Bath).